Consider the following 199-residue polypeptide: Recombination protein RecR (199 aa).

The segment at Cys57 to Cys72 adopts a C4-type zinc-finger fold. In terms of domain architecture, Toprim spans Asp81–Pro176.

Belongs to the RecR family.

Functionally, may play a role in DNA repair. It seems to be involved in an RecBC-independent recombinational process of DNA repair. It may act with RecF and RecO. The sequence is that of Recombination protein RecR from Shewanella loihica (strain ATCC BAA-1088 / PV-4).